The sequence spans 372 residues: MAAPVPWACCAVLAAAAAVVYAQRHSPQEAPHVQYERLGSDVTLPCGTANWDAAVTWRVNGTDLALDLLNGSQLVLHGLELGHSGLYACFHRDSWHLRHQVLLHVGLPPREPVLSCRSNTYPKGFYCSWHLPTPTYIPNTFNVTVLHGSKIMVCEKDPALKNRCHIRYMHLFSTIKYKVSISVSNALGHNATAITFDEFTIVKPDPPENVVARPVPSNPRRLEVTWQTPSTWPDPESFPLKFFLRYRPLILDQWQHVELSDGTTHTITDAYAGKEYIIQVAAKDYEIGTWSDWSVAAHATPWTEEPRHLTTEAQAPETTTSTTSSLAPPPTTKICDPGELGSGGGPSAPFLIHVPVTLALAAAAATANSLLI.

Positions 1–22 (MAAPVPWACCAVLAAAAAVVYA) are cleaved as a signal peptide. The Ig-like C2-type domain occupies 27–104 (PQEAPHVQYE…WHLRHQVLLH (78 aa)). Cys-46 and Cys-89 form a disulfide bridge. N-linked (GlcNAc...) asparagine glycans are attached at residues Asn-60, Asn-70, Asn-142, and Asn-190. 2 consecutive Fibronectin type-III domains span residues 108 to 205 (PPRE…VKPD) and 206 to 306 (PPEN…TEEP). The WSXWS motif signature appears at 290 to 294 (WSDWS). The tract at residues 301-340 (PWTEEPRHLTTEAQAPETTTSTTSSLAPPPTTKICDPGEL) is disordered. Positions 311 to 326 (TEAQAPETTTSTTSSL) are enriched in low complexity. Ser-342 is lipidated: GPI-anchor amidated serine. The propeptide at 343 to 372 (GGGPSAPFLIHVPVTLALAAAAATANSLLI) is removed in mature form.

This sequence belongs to the type I cytokine receptor family. Type 3 subfamily. Forms a heterotrimer with LIFR and IL6ST. Interacts with heterodimeric neurotropic cytokine composed of CLCF1/CLC and CRLF1/CLF-1. Either alone or in complex with the heterodimer CLCF1-CRLF1 interacts with SORL1; this interaction may promote internalization and lysosomal degradation. In terms of tissue distribution, expressed in retina, brain, spleen, lung, liver and kidney. In the retina it is highly expressed by photoreceptors, but also found in the RPE, inner nuclear layer and ganglion cells.

Its subcellular location is the cell membrane. Its function is as follows. Binds to CNTF. The alpha subunit provides the receptor specificity. This chain is Ciliary neurotrophic factor receptor subunit alpha (CNTFR), found in Canis lupus familiaris (Dog).